We begin with the raw amino-acid sequence, 309 residues long: Olfactory receptor 1A1 (309 aa).

At 1–25 (MRENNQSSTLEFILLGVTGQQEQED) the chain is on the extracellular side. Residue Asn-5 is glycosylated (N-linked (GlcNAc...) asparagine). The helical transmembrane segment at 26–49 (FFYILFLFIYPITLIGNLLIVLAI) threads the bilayer. At 50 to 57 (CSDVHLHN) the chain is on the cytoplasmic side. Residues 58–79 (PMYFLLANLSLVDIFFSSVTIP) traverse the membrane as a helical segment. Over 80–100 (KMLANHLLGSKSISFGGCLTQ) the chain is Extracellular. Cysteines 97 and 189 form a disulfide. A helical transmembrane segment spans residues 101-120 (MYFMIALGNTDSYILAAMAY). The Cytoplasmic segment spans residues 121 to 139 (DRAVAISRPLHYTTIMSPR). A helical transmembrane segment spans residues 140–158 (SCIWLIAGSWVIGNANALP). Residues 159 to 195 (HTLLTASLSFCGNQEVANFYCDITPLLKLSCSDIHFH) lie on the Extracellular side of the membrane. Residues 196 to 218 (VKMMYLGVGIFSVPLLCIIVSYI) traverse the membrane as a helical segment. Residues 219-235 (RVFSTVFQVPSTKGVLK) are Cytoplasmic-facing. The chain crosses the membrane as a helical span at residues 236 to 258 (AFSTCGSHLTVVSLYYGTVMGMY). Over 259 to 270 (FRPLTNYSLKDA) the chain is Extracellular. Residue Asn-264 is glycosylated (N-linked (GlcNAc...) asparagine). A helical membrane pass occupies residues 271 to 290 (VITVMYTAVTPMLNPFIYSL). Topologically, residues 291–309 (RNRDVKAALRKLFNKRISS) are cytoplasmic.

It belongs to the G-protein coupled receptor 1 family.

The protein resides in the cell membrane. In terms of biological role, odorant receptor. This is Olfactory receptor 1A1 (OR1A1) from Pan troglodytes (Chimpanzee).